A 247-amino-acid chain; its full sequence is 23S rRNA (guanosine-2'-O-)-methyltransferase RlmB (247 aa).

S-adenosyl-L-methionine is bound by residues G197, I217, and L226.

It belongs to the class IV-like SAM-binding methyltransferase superfamily. RNA methyltransferase TrmH family. RlmB subfamily.

It is found in the cytoplasm. The enzyme catalyses guanosine(2251) in 23S rRNA + S-adenosyl-L-methionine = 2'-O-methylguanosine(2251) in 23S rRNA + S-adenosyl-L-homocysteine + H(+). In terms of biological role, specifically methylates the ribose of guanosine 2251 in 23S rRNA. In Burkholderia sp, this protein is 23S rRNA (guanosine-2'-O-)-methyltransferase RlmB.